The following is a 177-amino-acid chain: Inorganic pyrophosphatase (177 aa).

3 residues coordinate substrate: lysine 30, arginine 44, and tyrosine 56. Aspartate 66, aspartate 71, and aspartate 103 together coordinate Mg(2+). A substrate-binding site is contributed by tyrosine 142.

Belongs to the PPase family. In terms of assembly, homohexamer. It depends on Mg(2+) as a cofactor.

The protein resides in the cytoplasm. The enzyme catalyses diphosphate + H2O = 2 phosphate + H(+). Catalyzes the hydrolysis of inorganic pyrophosphate (PPi) forming two phosphate ions. In Agrobacterium fabrum (strain C58 / ATCC 33970) (Agrobacterium tumefaciens (strain C58)), this protein is Inorganic pyrophosphatase.